The chain runs to 397 residues: Subtilisin-like protease 3 (397 aa).

A signal peptide spans 1 to 19; sequence MGCIKVISVFLAAIAAVDA. Positions 20-116 are excised as a propeptide; sequence RAFFHNRGGS…VEHDRVVKLA (97 aa). The region spanning 35 to 116 is the Inhibitor I9 domain; sequence SYIVVMKDGV…VEHDRVVKLA (82 aa). The region spanning 126 to 397 is the Peptidase S8 domain; it reads TWGLGRVSHR…NRLLYNGSGQ (272 aa). Catalysis depends on charge relay system residues aspartate 158 and histidine 189. N-linked (GlcNAc...) asparagine glycosylation is present at asparagine 250. Serine 344 acts as the Charge relay system in catalysis. N-linked (GlcNAc...) asparagine glycosylation occurs at asparagine 393.

Belongs to the peptidase S8 family.

The protein localises to the secreted. In terms of biological role, secreted subtilisin-like serine protease with keratinolytic activity that contributes to pathogenicity. The chain is Subtilisin-like protease 3 (SUB3) from Trichophyton equinum (Horse ringworm fungus).